A 548-amino-acid chain; its full sequence is MHIGKKNYPNLITSFRMNLKKIILNHDRFSHPERWKTNALLRFTFVYIKFLFDLMIIKNPLRMVGKTYRDAVTALNSLQSNYANIMAIRQTGDRKNTMTLLEMHEWSRRIGYSASDFNKLNIVHITGTKGKGSTAAFTSSILGQYKEQLPRIGLYTSPHLKSVRERIRINGEPISEEKFAKYFFEVWDRLDSTTSSLDKFPHMIPGSKPGYFKFLTLLSFHTFIQEDCKSCVYEVGVGGELDSTNIIEKPIVCGVTLLGIDHTFMLGDTIEEIAWNKGGIFKSGAPAFTVEKQPPQGLTILKERAEERKTTLTEVPSFKQLENVKLGIAGEFQKSNASLAVMLASEILHTSNILEEKIKCSSNASIPEKFIIGLQNTKWEGRCQVLEKGKNVWYIDGAHTKDSMVAASTWFRDTVRLSKRKKILLFNQQSRDANALVNNLYSSVSPEITFDDVIFTTNVTWKSGSYSADLVSMNTSQEDVEKLKVQESLVKNWNKIDDNRAKTHVTASIEEANELIETLYDEPADIFVTGSLHLVGGLLVVFDRIDVK.

Position 130–133 (130–133 (GKGS)) interacts with ATP. Mg(2+)-binding residues include S157, E234, and H262. 2 residues coordinate ATP: R382 and D396.

It belongs to the folylpolyglutamate synthase family. A monovalent cation serves as cofactor.

It is found in the mitochondrion inner membrane. The protein resides in the mitochondrion matrix. Its subcellular location is the cytoplasm. It carries out the reaction (6S)-5,6,7,8-tetrahydrofolyl-(gamma-L-Glu)(n) + L-glutamate + ATP = (6S)-5,6,7,8-tetrahydrofolyl-(gamma-L-Glu)(n+1) + ADP + phosphate + H(+). It functions in the pathway cofactor biosynthesis; tetrahydrofolylpolyglutamate biosynthesis. In terms of biological role, catalyzes conversion of folates to polyglutamate derivatives allowing concentration of folate compounds in the cell and the intracellular retention of these cofactors, which are important substrates for most of the folate-dependent enzymes that are involved in one-carbon transfer reactions involved in purine, pyrimidine and amino acid synthesis. Required for methionine synthesis and maintenance of intact mitochondrial DNA. Involved in telomere maintenance. This Saccharomyces cerevisiae (strain FostersO) (Baker's yeast) protein is Folylpolyglutamate synthase.